The primary structure comprises 238 residues: Small ribosomal subunit protein uS3 (238 aa).

A KH type-2 domain is found at 39–107 (MREFIHDYAK…ELHLNIVEIR (69 aa)). Over residues 212 to 222 (PQAHDRRHSEA) the composition is skewed to basic and acidic residues. The interval 212–238 (PQAHDRRHSEAQEGAAPRPPRRDRERA) is disordered.

It belongs to the universal ribosomal protein uS3 family. Part of the 30S ribosomal subunit. Forms a tight complex with proteins S10 and S14.

Binds the lower part of the 30S subunit head. Binds mRNA in the 70S ribosome, positioning it for translation. The protein is Small ribosomal subunit protein uS3 of Cereibacter sphaeroides (strain ATCC 17025 / ATH 2.4.3) (Rhodobacter sphaeroides).